A 55-amino-acid polypeptide reads, in one-letter code: Large ribosomal subunit protein bL33 (55 aa).

Belongs to the bacterial ribosomal protein bL33 family.

The protein is Large ribosomal subunit protein bL33 of Caulobacter sp. (strain K31).